Consider the following 374-residue polypeptide: Flap endonuclease 1 (374 aa).

Positions 1–105 (MGVKGLNQLI…GELEKRMIRK (105 aa)) are N-domain. A Mg(2+)-binding site is contributed by D34. DNA contacts are provided by R47 and R71. The Mg(2+) site is built by D87, E159, E161, D180, and D182. The tract at residues 123-254 (EMVRYEKRSV…VTAFKLIKEH (132 aa)) is I-domain. E159 is a binding site for DNA. Positions 232 and 234 each coordinate DNA. D234 is a binding site for Mg(2+). The segment at 341-349 (VQGRLDGFF) is interaction with PCNA. A compositionally biased stretch (basic and acidic residues) spans 354 to 365 (TEKRKPEQDKKT). Residues 354-374 (TEKRKPEQDKKTKGSKKAKKK) form a disordered region.

This sequence belongs to the XPG/RAD2 endonuclease family. FEN1 subfamily. As to quaternary structure, interacts with PCNA. Three molecules of FEN1 bind to one PCNA trimer with each molecule binding to one PCNA monomer. PCNA stimulates the nuclease activity without altering cleavage specificity. Mg(2+) is required as a cofactor. In terms of processing, phosphorylated. Phosphorylation upon DNA damage induces relocalization to the nuclear plasma.

The protein localises to the nucleus. Its subcellular location is the nucleolus. It is found in the nucleoplasm. It localises to the mitochondrion. Its function is as follows. Structure-specific nuclease with 5'-flap endonuclease and 5'-3' exonuclease activities involved in DNA replication and repair. During DNA replication, cleaves the 5'-overhanging flap structure that is generated by displacement synthesis when DNA polymerase encounters the 5'-end of a downstream Okazaki fragment. It enters the flap from the 5'-end and then tracks to cleave the flap base, leaving a nick for ligation. Also involved in the long patch base excision repair (LP-BER) pathway, by cleaving within the apurinic/apyrimidinic (AP) site-terminated flap. Acts as a genome stabilization factor that prevents flaps from equilibrating into structures that lead to duplications and deletions. Also possesses 5'-3' exonuclease activity on nicked or gapped double-stranded DNA, and exhibits RNase H activity. Also involved in replication and repair of rDNA and in repairing mitochondrial DNA. This Meyerozyma guilliermondii (strain ATCC 6260 / CBS 566 / DSM 6381 / JCM 1539 / NBRC 10279 / NRRL Y-324) (Yeast) protein is Flap endonuclease 1.